The primary structure comprises 572 residues: Methionine--tRNA ligase (572 aa).

Residues 11–21 (PYINGVKHLGN) carry the 'HIGH' region motif. Residues Cys143, Cys146, Cys156, and Cys159 each coordinate Zn(2+). The short motif at 341 to 345 (KFSTS) is the 'KMSKS' region element. Thr344 serves as a coordination point for ATP.

The protein belongs to the class-I aminoacyl-tRNA synthetase family. MetG type 1 subfamily. In terms of assembly, monomer. Zn(2+) serves as cofactor.

It is found in the cytoplasm. The enzyme catalyses tRNA(Met) + L-methionine + ATP = L-methionyl-tRNA(Met) + AMP + diphosphate. Is required not only for elongation of protein synthesis but also for the initiation of all mRNA translation through initiator tRNA(fMet) aminoacylation. This Maricaulis maris (strain MCS10) (Caulobacter maris) protein is Methionine--tRNA ligase.